Here is a 289-residue protein sequence, read N- to C-terminus: NAC domain-containing protein 2 (289 aa).

Residues leucine 7–lysine 158 enclose the NAC domain.

In terms of assembly, interacts with KIN10 and KIN11.

It is found in the nucleus. The chain is NAC domain-containing protein 2 (NAC002) from Arabidopsis thaliana (Mouse-ear cress).